Consider the following 295-residue polypeptide: Pyridoxal 5'-phosphate synthase subunit PdxS (295 aa).

Residue D25 coordinates D-ribose 5-phosphate. The active-site Schiff-base intermediate with D-ribose 5-phosphate is the K82. Residue G154 coordinates D-ribose 5-phosphate. R166 contributes to the D-glyceraldehyde 3-phosphate binding site. D-ribose 5-phosphate is bound by residues G215 and 236–237; that span reads GS.

It belongs to the PdxS/SNZ family. As to quaternary structure, in the presence of PdxT, forms a dodecamer of heterodimers.

The enzyme catalyses aldehydo-D-ribose 5-phosphate + D-glyceraldehyde 3-phosphate + L-glutamine = pyridoxal 5'-phosphate + L-glutamate + phosphate + 3 H2O + H(+). Its pathway is cofactor biosynthesis; pyridoxal 5'-phosphate biosynthesis. In terms of biological role, catalyzes the formation of pyridoxal 5'-phosphate from ribose 5-phosphate (RBP), glyceraldehyde 3-phosphate (G3P) and ammonia. The ammonia is provided by the PdxT subunit. Can also use ribulose 5-phosphate and dihydroxyacetone phosphate as substrates, resulting from enzyme-catalyzed isomerization of RBP and G3P, respectively. This Staphylococcus carnosus (strain TM300) protein is Pyridoxal 5'-phosphate synthase subunit PdxS.